A 785-amino-acid chain; its full sequence is Putative endonuclease MutS2 (785 aa).

Residue G335 to T342 participates in ATP binding. The stretch at T513 to E586 forms a coiled coil. A partially complements a deletion for mitomycin C (MMC) resistance and for chromosomal DNA transformation region spans residues K636 to K785. Residues P641 to L681 form a KOW region region. One can recognise a Smr domain in the interval L710–K785.

This sequence belongs to the DNA mismatch repair MutS family. MutS2 subfamily. In terms of assembly, binds to ribosomes as a homodimer. Binds to stalled/collided disomes, association is greater in (ribosome-targeted) antibiotic-treated cells (with increased stalling at specific mRNA sites). The clamp domain of one monomer binds the A-site finger, the 23S rRNA of the central protuberance and ribosomal protein uL5 of the leading (stalled) ribosome, while the other monomer binds in a gap between the ribosomal central protuberance and the L1 stalk of the leading ribosome.

Its subcellular location is the cytoplasm. Its function is as follows. Acts as a ribosome collision sensor splitting the ribosome into its 2 subunits. Detects stalled/collided disomes (pairs of ribosomes where the leading ribosome is stalled and a second ribosome has collided with it) which it binds and splits, by an ATP-hydrolysis driven conformational change. Does not seem to have endoribonuclease activity (in the context of ribosome stalling). Acts upstream of the ribosome quality control system (RQC), a ribosome-associated complex that mediates the extraction of incompletely synthesized nascent chains from stalled ribosomes and their subsequent degradation, probably generates substrates for RQC. Does not seem to be involved in mismatch repair or in the prevention of interspecific recombination during DNA transformation. Might be involved in homologous recombination. Putative endonuclease that may be involved in the suppression of homologous recombination and may therefore have a key role in the control of bacterial genetic diversity. This is Putative endonuclease MutS2 from Bacillus subtilis (strain 168).